Reading from the N-terminus, the 160-residue chain is uncharacterized protein (160 aa).

A helical membrane pass occupies residues 47–67 (LLGGFANVAAILTPLVAVLAY).

The protein resides in the membrane. This is an uncharacterized protein from Sinorhizobium fredii (strain NBRC 101917 / NGR234).